The primary structure comprises 247 residues: tRNA pseudouridine synthase A (247 aa).

Residue aspartate 52 is the Nucleophile of the active site. Tyrosine 113 is a binding site for substrate.

It belongs to the tRNA pseudouridine synthase TruA family. In terms of assembly, homodimer.

The catalysed reaction is uridine(38/39/40) in tRNA = pseudouridine(38/39/40) in tRNA. Formation of pseudouridine at positions 38, 39 and 40 in the anticodon stem and loop of transfer RNAs. The protein is tRNA pseudouridine synthase A of Bartonella bacilliformis (strain ATCC 35685 / KC583 / Herrer 020/F12,63).